Consider the following 181-residue polypeptide: MATRIRLQRHGRKSYAFYSIVIADSRAPRDGKFTEKIGTYNPNTNPATVDLNFERALHWVLVGAQPSDTVRNILSREGVYMKKHLLGGVAKGAFGEAEAEAKFEAWKNNKQSGLSALKAKEEEAKKAEAKARLEAEKKVNEVKAKALAEKKAAEEAAKAAAEAPAEEAAPAEEAATEAAAE.

The interval K150 to E181 is disordered. A compositionally biased stretch (low complexity) spans K158 to E181.

Belongs to the bacterial ribosomal protein bS16 family.

This is Small ribosomal subunit protein bS16 from Bacteroides fragilis (strain ATCC 25285 / DSM 2151 / CCUG 4856 / JCM 11019 / LMG 10263 / NCTC 9343 / Onslow / VPI 2553 / EN-2).